Consider the following 300-residue polypeptide: ETS homologous factor (300 aa).

The PNT domain maps to 29–115 (PTCNVSSGFF…SNLQHLKWNG (87 aa)). The interval 181-203 (VAESPDMKKEQDHPVKSHTKKHN) is disordered. A compositionally biased stretch (basic and acidic residues) spans 185-195 (PDMKKEQDHPV). The segment at residues 207–289 (THLWEFIRDI…DGRRLVYKFG (83 aa)) is a DNA-binding region (ETS).

This sequence belongs to the ETS family. In terms of tissue distribution, highly expressed in kidney and lung, weakly in skeletal muscle, heart, and liver, and not detected in brain, spleen or testis.

It is found in the nucleus. Its function is as follows. Transcriptional activator that may play a role in regulating epithelial cell differentiation and proliferation. May act as a repressor for a specific subset of ETS/AP-1-responsive genes, and as a modulator of the nuclear response to mitogen-activated protein kinase signaling cascades. Binds to DNA sequences containing the consensus nucleotide core sequence GGAA. Involved in regulation of TNFRSF10B/DR5 expression through Ets-binding sequences on the TNFRSF10B/DR5 promoter. The protein is ETS homologous factor of Mus musculus (Mouse).